The sequence spans 240 residues: Eukaryotic translation initiation factor 3 subunit K (240 aa).

A PCI domain is found at 41–221 (YDKDIVLTIL…TIKTRNIDEK (181 aa)).

The protein belongs to the eIF-3 subunit K family. Component of the eukaryotic translation initiation factor 3 (eIF-3) complex.

It is found in the cytoplasm. Component of the eukaryotic translation initiation factor 3 (eIF-3) complex, which is involved in protein synthesis of a specialized repertoire of mRNAs and, together with other initiation factors, stimulates binding of mRNA and methionyl-tRNAi to the 40S ribosome. The eIF-3 complex specifically targets and initiates translation of a subset of mRNAs involved in cell proliferation. The sequence is that of Eukaryotic translation initiation factor 3 subunit K from Caenorhabditis briggsae.